We begin with the raw amino-acid sequence, 342 residues long: Phosphate acyltransferase (342 aa).

Belongs to the PlsX family. In terms of assembly, homodimer. Probably interacts with PlsY.

It is found in the cytoplasm. It carries out the reaction a fatty acyl-[ACP] + phosphate = an acyl phosphate + holo-[ACP]. Its pathway is lipid metabolism; phospholipid metabolism. Functionally, catalyzes the reversible formation of acyl-phosphate (acyl-PO(4)) from acyl-[acyl-carrier-protein] (acyl-ACP). This enzyme utilizes acyl-ACP as fatty acyl donor, but not acyl-CoA. The chain is Phosphate acyltransferase from Pelotomaculum thermopropionicum (strain DSM 13744 / JCM 10971 / SI).